A 100-amino-acid polypeptide reads, in one-letter code: Aspartyl/glutamyl-tRNA(Asn/Gln) amidotransferase subunit C (100 aa).

This sequence belongs to the GatC family. Heterotrimer of A, B and C subunits.

It carries out the reaction L-glutamyl-tRNA(Gln) + L-glutamine + ATP + H2O = L-glutaminyl-tRNA(Gln) + L-glutamate + ADP + phosphate + H(+). The catalysed reaction is L-aspartyl-tRNA(Asn) + L-glutamine + ATP + H2O = L-asparaginyl-tRNA(Asn) + L-glutamate + ADP + phosphate + 2 H(+). Allows the formation of correctly charged Asn-tRNA(Asn) or Gln-tRNA(Gln) through the transamidation of misacylated Asp-tRNA(Asn) or Glu-tRNA(Gln) in organisms which lack either or both of asparaginyl-tRNA or glutaminyl-tRNA synthetases. The reaction takes place in the presence of glutamine and ATP through an activated phospho-Asp-tRNA(Asn) or phospho-Glu-tRNA(Gln). The polypeptide is Aspartyl/glutamyl-tRNA(Asn/Gln) amidotransferase subunit C (Streptococcus equi subsp. equi (strain 4047)).